Consider the following 403-residue polypeptide: Phosphopentomutase (403 aa).

Mn(2+) is bound by residues Asp13, Asp298, His303, Asp339, His340, and His351.

Belongs to the phosphopentomutase family. It depends on Mn(2+) as a cofactor.

Its subcellular location is the cytoplasm. It carries out the reaction 2-deoxy-alpha-D-ribose 1-phosphate = 2-deoxy-D-ribose 5-phosphate. It catalyses the reaction alpha-D-ribose 1-phosphate = D-ribose 5-phosphate. It participates in carbohydrate degradation; 2-deoxy-D-ribose 1-phosphate degradation; D-glyceraldehyde 3-phosphate and acetaldehyde from 2-deoxy-alpha-D-ribose 1-phosphate: step 1/2. Isomerase that catalyzes the conversion of deoxy-ribose 1-phosphate (dRib-1-P) and ribose 1-phosphate (Rib-1-P) to deoxy-ribose 5-phosphate (dRib-5-P) and ribose 5-phosphate (Rib-5-P), respectively. This chain is Phosphopentomutase, found in Streptococcus suis (strain 05ZYH33).